A 750-amino-acid chain; its full sequence is Photosystem I P700 chlorophyll a apoprotein A1 (750 aa).

The next 8 helical transmembrane spans lie at 70 to 93 (VFSA…FHGA), 156 to 179 (LYCT…FHYH), 195 to 219 (LNHH…HVSL), 291 to 309 (IAHH…GHMY), 346 to 369 (WHAQ…HHMY), 385 to 411 (LSLF…IFMV), 433 to 455 (AIIS…LYIH), and 531 to 549 (FLVH…LILL). Residues C573 and C582 each coordinate [4Fe-4S] cluster. 2 helical membrane-spanning segments follow: residues 589-610 (HVFL…HFSW) and 664-686 (LSAY…MFLF). H675 provides a ligand contact to chlorophyll a'. Chlorophyll a-binding residues include M683 and Y691. W692 contacts phylloquinone. The helical transmembrane segment at 724–744 (AVGVTHYLLGGIATTWAFFLA) threads the bilayer.

It belongs to the PsaA/PsaB family. In terms of assembly, the PsaA/B heterodimer binds the P700 chlorophyll special pair and subsequent electron acceptors. PSI consists of a core antenna complex that captures photons, and an electron transfer chain that converts photonic excitation into a charge separation. The eukaryotic PSI reaction center is composed of at least 11 subunits. P700 is a chlorophyll a/chlorophyll a' dimer, A0 is one or more chlorophyll a, A1 is one or both phylloquinones and FX is a shared 4Fe-4S iron-sulfur center. is required as a cofactor.

It localises to the plastid. Its subcellular location is the chloroplast thylakoid membrane. The catalysed reaction is reduced [plastocyanin] + hnu + oxidized [2Fe-2S]-[ferredoxin] = oxidized [plastocyanin] + reduced [2Fe-2S]-[ferredoxin]. In terms of biological role, psaA and PsaB bind P700, the primary electron donor of photosystem I (PSI), as well as the electron acceptors A0, A1 and FX. PSI is a plastocyanin-ferredoxin oxidoreductase, converting photonic excitation into a charge separation, which transfers an electron from the donor P700 chlorophyll pair to the spectroscopically characterized acceptors A0, A1, FX, FA and FB in turn. Oxidized P700 is reduced on the lumenal side of the thylakoid membrane by plastocyanin. This chain is Photosystem I P700 chlorophyll a apoprotein A1, found in Cucumis sativus (Cucumber).